Here is a 168-residue protein sequence, read N- to C-terminus: UPF0303 protein YE1367 (168 aa).

The protein belongs to the UPF0303 family.

The chain is UPF0303 protein YE1367 from Yersinia enterocolitica serotype O:8 / biotype 1B (strain NCTC 13174 / 8081).